The following is a 728-amino-acid chain: Tripartite terminase subunit 1 (728 aa).

The C3H1-type zinc finger occupies 186-214 (CASCFAEAAMLPNQGESVLSMLAAVNCNH). The interval 239 to 278 (ARAAGRAGGGRESERRGREDADDEEDDEEEPRDGQGDAGD) is disordered. Over residues 247 to 257 (GGRESERRGRE) the composition is skewed to basic and acidic residues. Positions 258–269 (DADDEEDDEEEP) are enriched in acidic residues. Position 653 to 660 (653 to 660 (YNRVWEKS)) interacts with ATP.

It belongs to the herpesviridae TRM1 protein family. In terms of assembly, associates with TRM2 and TRM3 to form the tripartite terminase complex. Interacts with portal protein.

The protein resides in the host nucleus. In terms of biological role, component of the molecular motor that translocates viral genomic DNA in empty capsid during DNA packaging. Forms a tripartite terminase complex together with TRM2 and TRM3 in the host cytoplasm. Once the complex reaches the host nucleus, it interacts with the capsid portal vertex. This portal forms a ring in which genomic DNA is translocated into the capsid. TRM1 carries an endonuclease activity that plays an important role for the cleavage of concatemeric viral DNA into unit length genomes. The protein is Tripartite terminase subunit 1 of Equine herpesvirus 2 (strain 86/87) (EHV-2).